A 177-amino-acid polypeptide reads, in one-letter code: Large ribosomal subunit protein uL6 (177 aa).

It belongs to the universal ribosomal protein uL6 family. Part of the 50S ribosomal subunit.

This protein binds to the 23S rRNA, and is important in its secondary structure. It is located near the subunit interface in the base of the L7/L12 stalk, and near the tRNA binding site of the peptidyltransferase center. The protein is Large ribosomal subunit protein uL6 of Rubrobacter xylanophilus (strain DSM 9941 / JCM 11954 / NBRC 16129 / PRD-1).